The chain runs to 199 residues: Crossover junction endodeoxyribonuclease RuvC (199 aa).

Catalysis depends on residues Asp-7, Glu-68, and Asp-141. Mg(2+) is bound by residues Asp-7, Glu-68, and Asp-141.

The protein belongs to the RuvC family. In terms of assembly, homodimer which binds Holliday junction (HJ) DNA. The HJ becomes 2-fold symmetrical on binding to RuvC with unstacked arms; it has a different conformation from HJ DNA in complex with RuvA. In the full resolvosome a probable DNA-RuvA(4)-RuvB(12)-RuvC(2) complex forms which resolves the HJ. Requires Mg(2+) as cofactor.

The protein localises to the cytoplasm. The catalysed reaction is Endonucleolytic cleavage at a junction such as a reciprocal single-stranded crossover between two homologous DNA duplexes (Holliday junction).. Its function is as follows. The RuvA-RuvB-RuvC complex processes Holliday junction (HJ) DNA during genetic recombination and DNA repair. Endonuclease that resolves HJ intermediates. Cleaves cruciform DNA by making single-stranded nicks across the HJ at symmetrical positions within the homologous arms, yielding a 5'-phosphate and a 3'-hydroxyl group; requires a central core of homology in the junction. The consensus cleavage sequence is 5'-(A/T)TT(C/G)-3'. Cleavage occurs on the 3'-side of the TT dinucleotide at the point of strand exchange. HJ branch migration catalyzed by RuvA-RuvB allows RuvC to scan DNA until it finds its consensus sequence, where it cleaves and resolves the cruciform DNA. This Saccharopolyspora erythraea (strain ATCC 11635 / DSM 40517 / JCM 4748 / NBRC 13426 / NCIMB 8594 / NRRL 2338) protein is Crossover junction endodeoxyribonuclease RuvC.